The following is a 159-amino-acid chain: Cytochrome c-type biogenesis CcmH-like mitochondrial protein (159 aa).

Residues 1-82 lie on the Mitochondrial intermembrane side of the membrane; it reads MEKTDEERKK…ETVLYAPKFD (82 aa). Heme-binding residues include cysteine 27 and cysteine 30. A helical transmembrane segment spans residues 83–105; that stretch reads LQTAALWLTPVIIAGGTAAGIVY. Residues 106 to 159 are Mitochondrial matrix-facing; it reads QKHRLRKNVDIMALNLIRGVPLTPKERVTILDVLIPPSPPPQGVVSRLRRWLNR.

It belongs to the CcmH/CycL/Ccl2/NrfF family. As to quaternary structure, interacts (via N-terminus) with CYTC-1. Interacts with CCMFN1 and CCMFN2.

It is found in the mitochondrion inner membrane. Functionally, plays a central role in mitochondrial cytochrome c maturation. Probable component of a heme lyase complex involved in the reduction of apocytochrome c. Forms a complex with CCMF proteins (CCMFC, CCMFN1 and CCMFN2) that performs the assembly of heme with c-type apocytochromes in mitochondria. The sequence is that of Cytochrome c-type biogenesis CcmH-like mitochondrial protein from Arabidopsis thaliana (Mouse-ear cress).